We begin with the raw amino-acid sequence, 430 residues long: Trigger factor (430 aa).

Positions 157-242 constitute a PPIase FKBP-type domain; that stretch reads GDLVALETWS…AVEVSEPVLP (86 aa).

This sequence belongs to the FKBP-type PPIase family. Tig subfamily.

It localises to the cytoplasm. The enzyme catalyses [protein]-peptidylproline (omega=180) = [protein]-peptidylproline (omega=0). Involved in protein export. Acts as a chaperone by maintaining the newly synthesized protein in an open conformation. Functions as a peptidyl-prolyl cis-trans isomerase. The protein is Trigger factor of Xanthomonas euvesicatoria pv. vesicatoria (strain 85-10) (Xanthomonas campestris pv. vesicatoria).